The chain runs to 485 residues: tRNA sulfurtransferase (485 aa).

The region spanning 63-167 (ERYAERLACI…NEHLYLVEKR (105 aa)) is the THUMP domain. Residues 185–186 (LI), Lys267, Gly289, and Gln298 each bind ATP. A disulfide bridge links Cys346 with Cys458. Residues 406 to 484 (VSGGEVVVDI…GYHNVKVYRP (79 aa)) form the Rhodanese domain. The active-site Cysteine persulfide intermediate is the Cys458.

This sequence belongs to the ThiI family.

The protein localises to the cytoplasm. It catalyses the reaction [ThiI sulfur-carrier protein]-S-sulfanyl-L-cysteine + a uridine in tRNA + 2 reduced [2Fe-2S]-[ferredoxin] + ATP + H(+) = [ThiI sulfur-carrier protein]-L-cysteine + a 4-thiouridine in tRNA + 2 oxidized [2Fe-2S]-[ferredoxin] + AMP + diphosphate. The catalysed reaction is [ThiS sulfur-carrier protein]-C-terminal Gly-Gly-AMP + S-sulfanyl-L-cysteinyl-[cysteine desulfurase] + AH2 = [ThiS sulfur-carrier protein]-C-terminal-Gly-aminoethanethioate + L-cysteinyl-[cysteine desulfurase] + A + AMP + 2 H(+). It functions in the pathway cofactor biosynthesis; thiamine diphosphate biosynthesis. Its function is as follows. Catalyzes the ATP-dependent transfer of a sulfur to tRNA to produce 4-thiouridine in position 8 of tRNAs, which functions as a near-UV photosensor. Also catalyzes the transfer of sulfur to the sulfur carrier protein ThiS, forming ThiS-thiocarboxylate. This is a step in the synthesis of thiazole, in the thiamine biosynthesis pathway. The sulfur is donated as persulfide by IscS. This chain is tRNA sulfurtransferase, found in Shewanella loihica (strain ATCC BAA-1088 / PV-4).